The primary structure comprises 50 residues: Acidic phospholipase A2 1 (50 aa).

Ca(2+)-binding residues include tyrosine 27, glycine 29, and glycine 31. An intrachain disulfide couples cysteine 28 to cysteine 44. Histidine 47 is a catalytic residue. Aspartate 48 is a binding site for Ca(2+).

The protein belongs to the phospholipase A2 family. Group II subfamily. D49 sub-subfamily. Monomer. It depends on Ca(2+) as a cofactor. As to expression, expressed by the venom gland.

The protein resides in the secreted. It carries out the reaction a 1,2-diacyl-sn-glycero-3-phosphocholine + H2O = a 1-acyl-sn-glycero-3-phosphocholine + a fatty acid + H(+). In terms of biological role, snake venom phospholipase A2 (PLA2) that displays a potent enzymatic activity as measured by indirect hemolysis of red blood cells. Is neither lethal when injected into mice nor does it present anticoagulant activity. Displays a moderate inhibitory activity on the aggregation of platelets induced by low levels of ADP, thrombin and arachidonate. In contrast, strongly inhibits platelet aggregation induced by high doses of collagen. Shows myotoxic activity, increases the plasma creatine-kinase activity and induces edema and myonecrosis of mouse skeletal muscles. PLA2 catalyzes the calcium-dependent hydrolysis of the 2-acyl groups in 3-sn-phosphoglycerides. The protein is Acidic phospholipase A2 1 of Lachesis muta muta (Bushmaster).